We begin with the raw amino-acid sequence, 142 residues long: Large ribosomal subunit protein uL11 (142 aa).

Belongs to the universal ribosomal protein uL11 family. As to quaternary structure, part of the ribosomal stalk of the 50S ribosomal subunit. Interacts with L10 and the large rRNA to form the base of the stalk. L10 forms an elongated spine to which L12 dimers bind in a sequential fashion forming a multimeric L10(L12)X complex. One or more lysine residues are methylated.

In terms of biological role, forms part of the ribosomal stalk which helps the ribosome interact with GTP-bound translation factors. This is Large ribosomal subunit protein uL11 from Parvibaculum lavamentivorans (strain DS-1 / DSM 13023 / NCIMB 13966).